The following is a 497-amino-acid chain: Probable cytosol aminopeptidase (497 aa).

Positions 267 and 272 each coordinate Mn(2+). Residue lysine 279 is part of the active site. Mn(2+)-binding residues include aspartate 290, aspartate 349, and glutamate 351. Arginine 353 is an active-site residue.

This sequence belongs to the peptidase M17 family. The cofactor is Mn(2+).

It localises to the cytoplasm. The catalysed reaction is Release of an N-terminal amino acid, Xaa-|-Yaa-, in which Xaa is preferably Leu, but may be other amino acids including Pro although not Arg or Lys, and Yaa may be Pro. Amino acid amides and methyl esters are also readily hydrolyzed, but rates on arylamides are exceedingly low.. It carries out the reaction Release of an N-terminal amino acid, preferentially leucine, but not glutamic or aspartic acids.. Presumably involved in the processing and regular turnover of intracellular proteins. Catalyzes the removal of unsubstituted N-terminal amino acids from various peptides. In Pseudomonas putida (strain ATCC 47054 / DSM 6125 / CFBP 8728 / NCIMB 11950 / KT2440), this protein is Probable cytosol aminopeptidase.